A 417-amino-acid polypeptide reads, in one-letter code: Gelsolin (417 aa).

A Gelsolin-like 4 repeat occupies 93–171 (KVPVLESHYG…VVQGKEPAHL (79 aa)). Residues G107, D108, E138, D150, G155, P157, T187, N227, D228, E250, D331, D332, and E354 each contribute to the Ca(2+) site. Gelsolin-like repeat units follow at residues 213–261 (RAVE…LKIL) and 316–392 (IEEV…PTFI).

This sequence belongs to the villin/gelsolin family.

It is found in the cytoplasm. The protein resides in the cytoskeleton. Its function is as follows. Calcium-regulated, actin-modulating protein that binds to the plus (or barbed) ends of actin monomers or filaments, preventing monomer exchange (end-blocking or capping). It can promote the assembly of monomers into filaments (nucleation) as well as sever filaments already formed. Plays a role in ciliogenesis. The sequence is that of Gelsolin (gsn) from Xenopus laevis (African clawed frog).